The following is an 88-amino-acid chain: UPF0250 protein Sbal_3280 (88 aa).

It belongs to the UPF0250 family.

This is UPF0250 protein Sbal_3280 from Shewanella baltica (strain OS155 / ATCC BAA-1091).